Here is a 296-residue protein sequence, read N- to C-terminus: Probable endonuclease 4 (296 aa).

Zn(2+) contacts are provided by histidine 68, histidine 109, glutamate 144, aspartate 178, histidine 181, histidine 213, aspartate 226, histidine 228, and glutamate 258.

This sequence belongs to the AP endonuclease 2 family. Requires Zn(2+) as cofactor.

It catalyses the reaction Endonucleolytic cleavage to 5'-phosphooligonucleotide end-products.. Its function is as follows. Endonuclease IV plays a role in DNA repair. It cleaves phosphodiester bonds at apurinic or apyrimidinic (AP) sites, generating a 3'-hydroxyl group and a 5'-terminal sugar phosphate. This is Probable endonuclease 4 from Staphylococcus aureus (strain Mu3 / ATCC 700698).